Here is a 258-residue protein sequence, read N- to C-terminus: Global transcriptional regulator CodY (258 aa).

The tract at residues 1–156 is GAF domain; sequence MSSLLSKTRR…SATIVGMEML (156 aa). Residues 204-223 constitute a DNA-binding region (H-T-H motif); the sequence is ASKIADKVGITRSVIVNALR.

The protein belongs to the CodY family.

It is found in the cytoplasm. DNA-binding global transcriptional regulator which is involved in the adaptive response to starvation and acts by directly or indirectly controlling the expression of numerous genes in response to nutrient availability. During rapid exponential growth, CodY is highly active and represses genes whose products allow adaptation to nutrient depletion. This is Global transcriptional regulator CodY from Clostridium botulinum (strain Eklund 17B / Type B).